A 205-amino-acid polypeptide reads, in one-letter code: MKMIIGRKVGMTRIFKDDKVIPVTVIKAGPCYVVQKKTIDTDGYNAIQIGFEEAKKVNKPMEGVFKKAGVKPLKILKEFRVENPEEFELGQEIKVDIFAEGDKIDITGWSKGRGFAGAMKRWGFRGGPKSHGAKFHRELGSVGQHSEPARIFKGKKMPGQYGNERVTILNSEIVKIDVENNLIAVKGGVPGARGGLVLIRTAKRG.

This sequence belongs to the universal ribosomal protein uL3 family. Part of the 50S ribosomal subunit. Forms a cluster with proteins L14 and L19.

In terms of biological role, one of the primary rRNA binding proteins, it binds directly near the 3'-end of the 23S rRNA, where it nucleates assembly of the 50S subunit. In Thermosipho africanus (strain TCF52B), this protein is Large ribosomal subunit protein uL3.